We begin with the raw amino-acid sequence, 97 residues long: Co-chaperonin GroES (97 aa).

Belongs to the GroES chaperonin family. As to quaternary structure, heptamer of 7 subunits arranged in a ring. Interacts with the chaperonin GroEL.

The protein resides in the cytoplasm. In terms of biological role, together with the chaperonin GroEL, plays an essential role in assisting protein folding. The GroEL-GroES system forms a nano-cage that allows encapsulation of the non-native substrate proteins and provides a physical environment optimized to promote and accelerate protein folding. GroES binds to the apical surface of the GroEL ring, thereby capping the opening of the GroEL channel. The sequence is that of Co-chaperonin GroES from Aeromonas salmonicida (strain A449).